The chain runs to 194 residues: Recombination protein RecR (194 aa).

The C4-type zinc finger occupies 53 to 68 (CEICFNLDVTSPCSIC). The region spanning 76–171 (SLLCIVEELG…KVTRLACGIP (96 aa)) is the Toprim domain.

This sequence belongs to the RecR family.

Its function is as follows. May play a role in DNA repair. It seems to be involved in an RecBC-independent recombinational process of DNA repair. It may act with RecF and RecO. The polypeptide is Recombination protein RecR (Anaplasma phagocytophilum (strain HZ)).